The sequence spans 3567 residues: Erythronolide synthase EryA2 (3567 aa).

The region spanning 30–455 (SDPIAIVSMA…GTNAHVIVEE (426 aa)) is the Ketosynthase family 3 (KS3) 1 domain. Module stretches follow at residues 33–1467 (IAIV…QHLR) and 1491–3485 (IAIV…EHLR). The active-site Acyl-thioester intermediate; for beta-ketoacyl synthase 1 activity is Cys202. Residues His337 and His377 each act as for beta-ketoacyl synthase 1 activity in the active site. The tract at residues 560–880 (VFLFPGQGSQ…MATAHVSGVD (321 aa)) is acyltransferase 1. The active-site Acyl-ester intermediate; for acyltransferase 1 activity is the Ser651. Residues 1132 to 1297 (GTVLVTGAAS…CTSVAWTPWA (166 aa)) form a C2-type beta-ketoacyl reductase 1 region. Tyr1267 serves as the catalytic For C2-type beta-ketoacyl reductase 1 and probable racemase activity. A disordered region spans residues 1364–1385 (GRGGQAEAEPDSGPTGEPAQRL). Residues 1395–1470 (ENLLELVANA…ALAQHLRARL (76 aa)) enclose the Carrier 1 domain. Ser1430 is modified (O-(pantetheine 4'-phosphoryl)serine). A Ketosynthase family 3 (KS3) 2 domain is found at 1488–1912 (SEPIAIVGIG…GTNAHVIVEE (425 aa)). The Acyl-thioester intermediate; for beta-ketoacyl synthase 2 activity role is filled by Cys1661. Catalysis depends on for beta-ketoacyl synthase 2 activity residues His1796 and His1834. The interval 2015–2331 (LVFPGQGAQW…NLLRAHVHGV (317 aa)) is acyltransferase 2. The active-site Acyl-ester intermediate; for acyltransferase 2 activity is the Ser2105. The segment at 2377-2502 (HPLLLAAVDV…GTLAQGVAAG (126 aa)) is N-terminal hotdog fold. Positions 2377–2645 (HPLLLAAVDV…SLVVRSTGEK (269 aa)) are dehydratase. Residues 2377-2648 (HPLLLAAVDV…VRSTGEKWEQ (272 aa)) form the PKS/mFAS DH domain. Catalysis depends on His2409, which acts as the Proton acceptor; for dehydratase activity. The segment at 2514–2648 (AVRIPLDDHY…VRSTGEKWEQ (135 aa)) is C-terminal hotdog fold. The active-site Proton donor; for dehydratase activity is Asp2571. Residues 2831 to 3131 (GAIDSVAFEP…RGRHVGKLVL (301 aa)) form an enoyl reductase region. Residue Tyr2874 is the For enoyl reductase activity of the active site. Residues 2964-2973 (HAAAGGVGMA), 3149-3152 (TGTL), 3173-3176 (SRRG), 3202-3203 (DT), Lys3250, and 3272-3273 (FS) each bind NADP(+). Residues 3141–3317 (GTVLITGGTG…AKALGWGLWA (177 aa)) form a beta-ketoacyl reductase 2 region. Tyr3287 serves as the catalytic For beta-ketoacyl reductase 2 activity. Residues 3413 to 3488 (AGLAELVRSH…AVAEHLRDRL (76 aa)) form the Carrier 2 domain. Position 3448 is an O-(pantetheine 4'-phosphoryl)serine (Ser3448).

In terms of assembly, homodimer. Erythronolide synthase is composed of EryAI, EryAII and EryAIII multimodular (2 modules) polypeptides each coding for a functional synthase subunit which participates in 2 of the six FAS-like elongation steps required for formation of the polyketide. Module 1, 2, 3, 4, 5, and 6 participating in biosynthesis steps 1, 2, 3, 4, 5, and 6, respectively. The cofactor is pantetheine 4'-phosphate.

The enzyme catalyses 6 (S)-methylmalonyl-CoA + propanoyl-CoA + 6 NADPH + 12 H(+) = 6-deoxyerythronolide B + 6 CO2 + 6 NADP(+) + 7 CoA + H2O. The protein operates within antibiotic biosynthesis; erythromycin biosynthesis. In terms of biological role, involved in the biosynthesis of antibiotic erythromycin via the biosynthesis of its aglycone precursor, 6-deoxyerythronolide B (6-dEB). The polypeptide is Erythronolide synthase EryA2 (Saccharopolyspora erythraea (Streptomyces erythraeus)).